The sequence spans 252 residues: Serine/threonine phosphatase stp (252 aa).

Basic and acidic residues predominate over residues Met1–Asp18. Residues Met1–Phe23 form a disordered region. In terms of domain architecture, PPM-type phosphatase spans His2–Arg242. 4 residues coordinate Mn(2+): Asp36, Gly37, Asp194, and Asp233.

This sequence belongs to the PP2C family. Mn(2+) is required as a cofactor.

The protein localises to the cytoplasm. Its subcellular location is the membrane. It catalyses the reaction O-phospho-L-seryl-[protein] + H2O = L-seryl-[protein] + phosphate. It carries out the reaction O-phospho-L-threonyl-[protein] + H2O = L-threonyl-[protein] + phosphate. With respect to regulation, activity not affected by inhibitors of phosphatases of the PPP family such as okadaic acid and cypermethrin, or by inhibitors of phosphatases of the PTP family such as sodium orthovanadate. Functionally, protein phosphatase that dephosphorylates EF-Tu. This chain is Serine/threonine phosphatase stp (stp), found in Listeria monocytogenes serovar 1/2a (strain ATCC BAA-679 / EGD-e).